A 62-amino-acid polypeptide reads, in one-letter code: Alpha-lytic protease L1 (62 aa).

Ser-48 functions as the Charge relay system in the catalytic mechanism.

The protein belongs to the peptidase S1 family. Monomer.

The protein resides in the secreted. It carries out the reaction Preferential cleavage: Ala-|-Xaa, Val-|-Xaa in bacterial cell walls, elastin and other proteins.. Inhibited by phenylmethanesulfonyl fluoride (PMSF) and p-chloromercuribenzoate (PCMB). Has bacteriolytic activity. The polypeptide is Alpha-lytic protease L1 (Lysobacter sp. (strain XL1)).